Reading from the N-terminus, the 726-residue chain is Disintegrin and metalloproteinase domain-containing protein 20 (726 aa).

The N-terminal stretch at 1 to 31 is a signal peptide; it reads MAVGEPLVHIRVTLLLLWFGMFLSISGHSQA. Positions 32 to 206 are excised as a propeptide; that stretch reads RPSQYFTSPE…SSFVGWWTHQ (175 aa). The short motif at 171-178 is the Cysteine switch element; the sequence is MRCGLTEE. C173 is a binding site for Zn(2+). N-linked (GlcNAc...) asparagine glycosylation is found at N191 and N226. The Peptidase M12B domain occupies 207–400; sequence RFVELVVVVD…SGLCIQPPPY (194 aa). Residues 207-693 lie on the Extracellular side of the membrane; that stretch reads RFVELVVVVD…GLNVMGKLRY (487 aa). Intrachain disulfides connect C317-C394, C357-C379, and C359-C364. A Zn(2+)-binding site is contributed by H342. Residue E343 is part of the active site. Residues H346 and H352 each coordinate Zn(2+). N378, N438, N479, and N587 each carry an N-linked (GlcNAc...) asparagine glycan. Positions 407-493 constitute a Disintegrin domain; it reads LKYCGNLVVE…QCPDDVYVQD (87 aa). A disulfide bridge links C465 with C485. 3 cysteine pairs are disulfide-bonded: C635/C646, C640/C652, and C654/C663. The EGF-like domain maps to 635 to 663; the sequence is CQPKTCNMRGICNNKQHCHCNHEWAPPYC. Residues 694–714 form a helical membrane-spanning segment; sequence LSLLCLLPLVAFLLFCLHVLF. Residues 715 to 726 lie on the Cytoplasmic side of the membrane; the sequence is KKRTKSKEDEEG.

It depends on Zn(2+) as a cofactor. In terms of processing, has no obvious cleavage site for furin endopeptidase, suggesting that the proteolytic processing is regulated. As to expression, testis specific.

Its subcellular location is the membrane. Functionally, may be involved in sperm maturation and/or fertilization. The chain is Disintegrin and metalloproteinase domain-containing protein 20 (ADAM20) from Homo sapiens (Human).